Here is a 201-residue protein sequence, read N- to C-terminus: Pectinesterase inhibitor 7 (201 aa).

An N-terminal signal peptide occupies residues 1–24 (MARNFELSLILFVLYLSTAAIVMA). 2 cysteine pairs are disulfide-bonded: cysteine 42–cysteine 51 and cysteine 108–cysteine 159.

This sequence belongs to the PMEI family. In terms of assembly, binds reversibly to PME3 to inhibit its activity; the stability of the PME3-PMEI7 complex and the inhibition of the pectin methylesterase (PME) activity is pH-dependent, based on protonation status of amino-acids at the complex interface. Accumulates in etiolated hypocotyls (at protein level).

The protein resides in the secreted. It localises to the extracellular space. The protein localises to the apoplast. Its subcellular location is the cell wall. Pectin methylesterase (PME) inhibitor that can target PME3 in a pH-dependent manner, mainly in slightly acidic conditions (pH 6.0 and 5.0) but not at pH 7.0; this processus relies on changes in the protonation of amino acids involved in intermolecular and intramolecular interactions. Regulates homogalacturonan methylesterification during plant development. The sequence is that of Pectinesterase inhibitor 7 from Arabidopsis thaliana (Mouse-ear cress).